A 245-amino-acid chain; its full sequence is MEKTELIQKAKLAEQAERYDDMATCMKAVTEQGAELSNEERNLLSVAYKNVVGGRRSAWRVISSIEQKTDTSDKKLQLIKDYREKVESELRSICTTVLELLDKYLIANATNPESKVFYLKMKGDYFRYLAEVACGDDRKQTIENSQGAYQEAFDISKKEMQPTHPIRLGLALNFSVFYYEILNNPELACTLAKTAFDEAIAELDTLNEDSYKDSTLIMQLLRDNLTLWTSDSAGEECDAAEGAEN.

Met-1 carries the N-acetylmethionine modification. N6-acetyllysine is present on Lys-3. N6-acetyllysine; alternate is present on Lys-49. Residue Lys-49 forms a Glycyl lysine isopeptide (Lys-Gly) (interchain with G-Cter in SUMO2); alternate linkage. Lys-68 is subject to N6-acetyllysine. Residue Tyr-82 is modified to 3'-nitrotyrosine. At Ser-92 the chain carries Phosphoserine. Residue Tyr-104 is modified to 3'-nitrotyrosine. Position 115 is an N6-acetyllysine (Lys-115). Ser-232 carries the phosphoserine; by CK1 modification.

Belongs to the 14-3-3 family. Homodimer. Interacts with CDKN1B ('Thr-198' phosphorylated form); the interaction translocates CDKN1B to the cytoplasm. Interacts with SSH1. Interacts with GAB2. Interacts with RGS7 (phosphorylated form). Interacts with CDK16. Interacts with the 'Ser-241' phosphorylated form of PDPK1. Interacts with the 'Thr-369' phosphorylated form of DAPK2. Interacts with PI4KB, TBC1D22A and TBC1D22B. Interacts with SLITRK1. Interacts with RIPOR2. Interacts with INAVA; the interaction increases upon PRR (pattern recognition receptor) stimulation and is required for cellular signaling pathway activation and cytokine secretion. Interacts with MARK2, MARK3 and MARK4. Interacts with MEFV.

The protein resides in the cytoplasm. Functionally, adapter protein implicated in the regulation of a large spectrum of both general and specialized signaling pathways. Binds to a large number of partners, usually by recognition of a phosphoserine or phosphothreonine motif. Binding generally results in the modulation of the activity of the binding partner. Negatively regulates the kinase activity of PDPK1. This is 14-3-3 protein theta (Ywhaq) from Mus musculus (Mouse).